Reading from the N-terminus, the 115-residue chain is NADH-ubiquinone oxidoreductase chain 3 (115 aa).

3 consecutive transmembrane segments (helical) span residues 3 to 23 (LILT…IAFW), 55 to 75 (FFLV…LLPL), and 86 to 106 (TMLT…AYEW).

This sequence belongs to the complex I subunit 3 family. Core subunit of respiratory chain NADH dehydrogenase (Complex I) which is composed of 45 different subunits. Interacts with TMEM186. Interacts with TMEM242.

Its subcellular location is the mitochondrion inner membrane. It carries out the reaction a ubiquinone + NADH + 5 H(+)(in) = a ubiquinol + NAD(+) + 4 H(+)(out). Functionally, core subunit of the mitochondrial membrane respiratory chain NADH dehydrogenase (Complex I) which catalyzes electron transfer from NADH through the respiratory chain, using ubiquinone as an electron acceptor. Essential for the catalytic activity of complex I. This Rhinoceros unicornis (Greater Indian rhinoceros) protein is NADH-ubiquinone oxidoreductase chain 3.